Consider the following 514-residue polypeptide: UDP-N-acetylmuramate--L-alanine ligase (514 aa).

Position 127-133 (127-133 (GTHGKTT)) interacts with ATP. The span at 495-505 (IGGTIPDIPGG) shows a compositional bias: low complexity. The tract at residues 495–514 (IGGTIPDIPGGSTPDASAAG) is disordered.

It belongs to the MurCDEF family.

The protein resides in the cytoplasm. It catalyses the reaction UDP-N-acetyl-alpha-D-muramate + L-alanine + ATP = UDP-N-acetyl-alpha-D-muramoyl-L-alanine + ADP + phosphate + H(+). It participates in cell wall biogenesis; peptidoglycan biosynthesis. In terms of biological role, cell wall formation. In Salinispora tropica (strain ATCC BAA-916 / DSM 44818 / JCM 13857 / NBRC 105044 / CNB-440), this protein is UDP-N-acetylmuramate--L-alanine ligase.